A 475-amino-acid polypeptide reads, in one-letter code: Ribulose bisphosphate carboxylase large chain (475 aa).

Residues 1–2 constitute a propeptide that is removed on maturation; sequence MS. Pro3 is subject to N-acetylproline. Lys14 bears the N6,N6,N6-trimethyllysine mark. Substrate-binding residues include Asn123 and Thr173. Lys175 (proton acceptor) is an active-site residue. Lys177 contributes to the substrate binding site. Residues Lys201, Asp203, and Glu204 each coordinate Mg(2+). Lys201 is modified (N6-carboxylysine). The active-site Proton acceptor is His294. Substrate-binding residues include Arg295, His327, and Ser379.

It belongs to the RuBisCO large chain family. Type I subfamily. In terms of assembly, heterohexadecamer of 8 large chains and 8 small chains; disulfide-linked. The disulfide link is formed within the large subunit homodimers. Requires Mg(2+) as cofactor. In terms of processing, the disulfide bond which can form in the large chain dimeric partners within the hexadecamer appears to be associated with oxidative stress and protein turnover.

It is found in the plastid. Its subcellular location is the chloroplast. The enzyme catalyses 2 (2R)-3-phosphoglycerate + 2 H(+) = D-ribulose 1,5-bisphosphate + CO2 + H2O. The catalysed reaction is D-ribulose 1,5-bisphosphate + O2 = 2-phosphoglycolate + (2R)-3-phosphoglycerate + 2 H(+). In terms of biological role, ruBisCO catalyzes two reactions: the carboxylation of D-ribulose 1,5-bisphosphate, the primary event in carbon dioxide fixation, as well as the oxidative fragmentation of the pentose substrate in the photorespiration process. Both reactions occur simultaneously and in competition at the same active site. The sequence is that of Ribulose bisphosphate carboxylase large chain from Pinus longaeva (Great Basin bristlecone pine).